The chain runs to 111 residues: Large ribosomal subunit protein uL24 (111 aa).

Residues 48 to 65 show a composition bias toward basic and acidic residues; that stretch reads EKPSRSNREGGRTEREAP. Positions 48-111 are disordered; sequence EKPSRSNREG…AKTTGEELDD (64 aa). Residues 69-80 show a composition bias toward polar residues; that stretch reads SNVNPIDSNGES. Residues 86 to 95 are compositionally biased toward basic and acidic residues; that stretch reads KKVEDPDTGR.

Belongs to the universal ribosomal protein uL24 family. In terms of assembly, part of the 50S ribosomal subunit.

One of two assembly initiator proteins, it binds directly to the 5'-end of the 23S rRNA, where it nucleates assembly of the 50S subunit. Its function is as follows. One of the proteins that surrounds the polypeptide exit tunnel on the outside of the subunit. This is Large ribosomal subunit protein uL24 from Salinibacter ruber (strain DSM 13855 / M31).